Reading from the N-terminus, the 246-residue chain is Flavin-dependent thymidylate synthase (246 aa).

The region spanning 17-241 is the ThyX domain; the sequence is VTVELVKHSA…PLTYAAFNTN (225 aa). FAD-binding positions include Ser-69, 92 to 94, and Glu-101; that span reads RHR. Residues 89–92, 101–105, and Arg-173 contribute to the dUMP site; these read EFMR and EESGR. Residues 92-103 carry the ThyX motif motif; it reads RHRVGWSYNEES. FAD is bound by residues 189–191 and His-195; that span reads NAR. Arg-200 contacts dUMP. Arg-200 (involved in ionization of N3 of dUMP, leading to its activation) is an active-site residue.

Belongs to the thymidylate synthase ThyX family. In terms of assembly, homotetramer. FAD is required as a cofactor.

The catalysed reaction is dUMP + (6R)-5,10-methylene-5,6,7,8-tetrahydrofolate + NADPH + H(+) = dTMP + (6S)-5,6,7,8-tetrahydrofolate + NADP(+). Its pathway is pyrimidine metabolism; dTTP biosynthesis. Its function is as follows. Catalyzes the reductive methylation of 2'-deoxyuridine-5'-monophosphate (dUMP) to 2'-deoxythymidine-5'-monophosphate (dTMP) while utilizing 5,10-methylenetetrahydrofolate (mTHF) as the methyl donor, and NADPH and FADH(2) as the reductant. The polypeptide is Flavin-dependent thymidylate synthase (Streptomyces avermitilis (strain ATCC 31267 / DSM 46492 / JCM 5070 / NBRC 14893 / NCIMB 12804 / NRRL 8165 / MA-4680)).